Here is a 390-residue protein sequence, read N- to C-terminus: uncharacterized protein (390 aa).

This is an uncharacterized protein from Orgyia pseudotsugata multicapsid polyhedrosis virus (OpMNPV).